We begin with the raw amino-acid sequence, 928 residues long: Isoleucine--tRNA ligase (928 aa).

Positions 57–67 match the 'HIGH' region motif; the sequence is PFANGNIHMGH. Position 554 (Glu-554) interacts with L-isoleucyl-5'-AMP. The 'KMSKS' region signature appears at 595 to 599; the sequence is KMSKS. Position 598 (Lys-598) interacts with ATP. Cys-887, Cys-890, Cys-907, and Cys-910 together coordinate Zn(2+).

The protein belongs to the class-I aminoacyl-tRNA synthetase family. IleS type 1 subfamily. Monomer. Zn(2+) is required as a cofactor.

The protein resides in the cytoplasm. The enzyme catalyses tRNA(Ile) + L-isoleucine + ATP = L-isoleucyl-tRNA(Ile) + AMP + diphosphate. Catalyzes the attachment of isoleucine to tRNA(Ile). As IleRS can inadvertently accommodate and process structurally similar amino acids such as valine, to avoid such errors it has two additional distinct tRNA(Ile)-dependent editing activities. One activity is designated as 'pretransfer' editing and involves the hydrolysis of activated Val-AMP. The other activity is designated 'posttransfer' editing and involves deacylation of mischarged Val-tRNA(Ile). The protein is Isoleucine--tRNA ligase of Lactobacillus johnsonii (strain CNCM I-12250 / La1 / NCC 533).